The sequence spans 319 residues: Polyprenyl transferase macG (319 aa).

Helical transmembrane passes span 28–45 (AWLC…AAGM), 48–68 (VSLE…SVTA), 106–126 (AVVA…GTLG), 127–147 (PAVM…PFMK), 152–172 (FPQV…WVGI), 182–202 (ALPL…FYAT), 224–244 (VQIL…VTAL), 249–269 (SLIF…WHIL), and 289–309 (LGLY…VYDI).

It belongs to the UbiA prenyltransferase family. Mg(2+) serves as cofactor.

The protein resides in the membrane. Its pathway is secondary metabolite biosynthesis; terpenoid biosynthesis. Functionally, polyprenyl transferase; part of the gene cluster that mediates the biosynthesis of macrophorins, isoprenoid epoxycyclohexenones containing cyclized drimane moieties. The first step of the pathway is the synthesis of 6-methylsalicylic acid (6-MSA) by the polyketide synthase macA. 6-MSA is then converted to m-cresol by the decarboxylase macB. The cytochrome P450 monooxygenase macC then catalyzes the oxidation of m-cresol to toluquinol. Epoxidation of toluquinol is then performed by the short chain dehydrogenase macD, with the help of macE, and a further prenylation by macG leads to 7-deacetoxyyanuthone A. The next step is the hydroxylation of C-22 of 7-deacetoxyyanuthone A by the cytochrome P450 monooxygenase macH to yield 22-deacetylyanuthone A. O-Mevalon transferase macI then attaches mevalon to the hydroxyl group of 22-deacetylyanuthone A to produce yanuthone E. The terpene cyclase macJ catalyzes the cyclization of 22-deacetylyanuthone A to macrophorin A. MacJ is also able to catalyze cyclization of yanuthone E and 7-deacetoxyyanuthone A to their corresponding macrophorins. The macJ products can be further modified by macH and macJ, as well as by the FAD-dependent monooxygenase macF, to produce additional macrophorins, including 4'-oxomacrophorin A, 4'-oxomacrophorin D and 4'-oxomacrophorin E. The sequence is that of Polyprenyl transferase macG from Penicillium terrestre.